The chain runs to 250 residues: NADH-quinone oxidoreductase subunit C (250 aa).

This sequence belongs to the complex I 30 kDa subunit family. As to quaternary structure, NDH-1 is composed of 14 different subunits. Subunits NuoB, C, D, E, F, and G constitute the peripheral sector of the complex.

It is found in the cell inner membrane. It catalyses the reaction a quinone + NADH + 5 H(+)(in) = a quinol + NAD(+) + 4 H(+)(out). Functionally, NDH-1 shuttles electrons from NADH, via FMN and iron-sulfur (Fe-S) centers, to quinones in the respiratory chain. The immediate electron acceptor for the enzyme in this species is believed to be ubiquinone. Couples the redox reaction to proton translocation (for every two electrons transferred, four hydrogen ions are translocated across the cytoplasmic membrane), and thus conserves the redox energy in a proton gradient. This chain is NADH-quinone oxidoreductase subunit C, found in Xanthomonas campestris pv. campestris (strain 8004).